Consider the following 472-residue polypeptide: Pyruvate kinase (472 aa).

Arginine 33 serves as a coordination point for substrate. Residues asparagine 35, serine 37, and aspartate 67 each coordinate K(+). Residue 35–38 coordinates ATP; that stretch reads NFSH. Residues arginine 74 and lysine 155 each contribute to the ATP site. Glutamate 220 contributes to the Mg(2+) binding site. Residues glycine 243, aspartate 244, and threonine 276 each contribute to the substrate site. Aspartate 244 is a Mg(2+) binding site.

The protein belongs to the pyruvate kinase family. As to quaternary structure, homotetramer. Mg(2+) serves as cofactor. Requires K(+) as cofactor.

The catalysed reaction is pyruvate + ATP = phosphoenolpyruvate + ADP + H(+). Its pathway is carbohydrate degradation; glycolysis; pyruvate from D-glyceraldehyde 3-phosphate: step 5/5. The sequence is that of Pyruvate kinase (pyk) from Mycobacterium intracellulare.